We begin with the raw amino-acid sequence, 346 residues long: Uroporphyrinogen decarboxylase (346 aa).

Residues R26–R30, D76, Y153, S208, and H323 each bind substrate.

It belongs to the uroporphyrinogen decarboxylase family. In terms of assembly, homodimer.

It is found in the cytoplasm. It carries out the reaction uroporphyrinogen III + 4 H(+) = coproporphyrinogen III + 4 CO2. It functions in the pathway porphyrin-containing compound metabolism; protoporphyrin-IX biosynthesis; coproporphyrinogen-III from 5-aminolevulinate: step 4/4. In terms of biological role, catalyzes the decarboxylation of four acetate groups of uroporphyrinogen-III to yield coproporphyrinogen-III. The polypeptide is Uroporphyrinogen decarboxylase (Prochlorococcus marinus (strain AS9601)).